The following is a 271-amino-acid chain: Phosphate import ATP-binding protein PstB 2 (271 aa).

An ABC transporter domain is found at 25–266; the sequence is MATEDLHVYY…PQEKQTEDYI (242 aa). 57–64 provides a ligand contact to ATP; that stretch reads GPSGCGKS.

Belongs to the ABC transporter superfamily. Phosphate importer (TC 3.A.1.7) family. As to quaternary structure, the complex is composed of two ATP-binding proteins (PstB), two transmembrane proteins (PstC and PstA) and a solute-binding protein (PstS).

It is found in the cell membrane. The enzyme catalyses phosphate(out) + ATP + H2O = ADP + 2 phosphate(in) + H(+). Part of the ABC transporter complex PstSACB involved in phosphate import. Responsible for energy coupling to the transport system. This Listeria monocytogenes serovar 1/2a (strain ATCC BAA-679 / EGD-e) protein is Phosphate import ATP-binding protein PstB 2.